A 124-amino-acid chain; its full sequence is Histone H2A, embryonic (124 aa).

A compositionally biased stretch (basic residues) spans 1 to 18 (MSGRGKSGKARTKAKTRS). A disordered region spans residues 1–21 (MSGRGKSGKARTKAKTRSSRA). S2 carries the post-translational modification N-acetylserine. At S2 the chain carries Phosphoserine. Q104 carries the post-translational modification N5-methylglutamine. K119 participates in a covalent cross-link: Glycyl lysine isopeptide (Lys-Gly) (interchain with G-Cter in ubiquitin).

The protein belongs to the histone H2A family. The nucleosome is a histone octamer containing two molecules each of H2A, H2B, H3 and H4 assembled in one H3-H4 heterotetramer and two H2A-H2B heterodimers. The octamer wraps approximately 147 bp of DNA. Post-translationally, monoubiquitination of Lys-119 gives a specific tag for epigenetic transcriptional repression. In terms of processing, phosphorylation of Ser-2 directly represses transcription.

It localises to the nucleus. The protein localises to the chromosome. In terms of biological role, core component of nucleosome. Nucleosomes wrap and compact DNA into chromatin, limiting DNA accessibility to the cellular machineries which require DNA as a template. Histones thereby play a central role in transcription regulation, DNA repair, DNA replication and chromosomal stability. DNA accessibility is regulated via a complex set of post-translational modifications of histones, also called histone code, and nucleosome remodeling. The protein is Histone H2A, embryonic of Psammechinus miliaris (Green sea urchin).